Consider the following 117-residue polypeptide: Large ribosomal subunit protein bL20 (117 aa).

This sequence belongs to the bacterial ribosomal protein bL20 family.

Functionally, binds directly to 23S ribosomal RNA and is necessary for the in vitro assembly process of the 50S ribosomal subunit. It is not involved in the protein synthesizing functions of that subunit. This chain is Large ribosomal subunit protein bL20, found in Citrifermentans bemidjiense (strain ATCC BAA-1014 / DSM 16622 / JCM 12645 / Bem) (Geobacter bemidjiensis).